The following is a 161-amino-acid chain: Cyclic pyranopterin monophosphate synthase (161 aa).

Substrate-binding positions include Met-75–His-77 and Met-115–Glu-116. Asp-130 is an active-site residue.

It belongs to the MoaC family. In terms of assembly, homohexamer; trimer of dimers.

It catalyses the reaction (8S)-3',8-cyclo-7,8-dihydroguanosine 5'-triphosphate = cyclic pyranopterin phosphate + diphosphate. Its pathway is cofactor biosynthesis; molybdopterin biosynthesis. Catalyzes the conversion of (8S)-3',8-cyclo-7,8-dihydroguanosine 5'-triphosphate to cyclic pyranopterin monophosphate (cPMP). The polypeptide is Cyclic pyranopterin monophosphate synthase (Bacillus cereus (strain ATCC 10987 / NRS 248)).